We begin with the raw amino-acid sequence, 501 residues long: Lysine--tRNA ligase (501 aa).

E404 and E411 together coordinate Mg(2+).

It belongs to the class-II aminoacyl-tRNA synthetase family. Homodimer. Mg(2+) is required as a cofactor.

The protein localises to the cytoplasm. The enzyme catalyses tRNA(Lys) + L-lysine + ATP = L-lysyl-tRNA(Lys) + AMP + diphosphate. The protein is Lysine--tRNA ligase of Campylobacter jejuni (strain RM1221).